A 360-amino-acid chain; its full sequence is MTATLERRQSVSLWERFCGWITSTENRLYIGWFGCLMFPTLLTATSCYIIAFIAAPPVDIDGIREPVAGSLLYGNNIITGAVIPSSNAIGIHFYPIWEAASVDEWLYNGGPYQLIVLHFLLGVASYMGREWELSYRLGMRPWIFVAFSAPVAAASAVFLVYPIGQGSFSDGMPLGISGTFNFMLVFQAEHNILMHPFHMAGVAGVFGGSLFSAMHGSLVTSSLIRETTENESTNYGYKFGQEEETYNIVAAHGYFGRLIFQYASFNNSRALHFFLALWPVVGIWLTAMGVSTMAFNLNGFNFNQSVVDSQGRVINTWADIINRADLGMEVMHERNAHNFPLDLASGEVLPVALTAPAVNG.

3 helical membrane-spanning segments follow: residues 29–46, 118–133, and 142–156; these read YIGW…TATS, HFLL…EWEL, and WIFV…AASA. His-118 lines the chlorophyll a pocket. Tyr-126 lines the pheophytin a pocket. [CaMn4O5] cluster is bound by residues Asp-170 and Glu-189. Residues 197–218 form a helical membrane-spanning segment; it reads FHMAGVAGVFGGSLFSAMHGSL. His-198 contributes to the chlorophyll a binding site. A quinone is bound by residues His-215 and 264–265; that span reads SF. Residue His-215 coordinates Fe cation. Residue His-272 participates in Fe cation binding. Residues 274–288 form a helical membrane-spanning segment; it reads FLALWPVVGIWLTAM. [CaMn4O5] cluster is bound by residues His-332, Glu-333, Asp-342, and Ala-344. Residues 345-360 constitute a propeptide that is removed on maturation; it reads SGEVLPVALTAPAVNG.

It belongs to the reaction center PufL/M/PsbA/D family. As to quaternary structure, PSII is composed of 1 copy each of membrane proteins PsbA, PsbB, PsbC, PsbD, PsbE, PsbF, PsbH, PsbI, PsbJ, PsbK, PsbL, PsbM, PsbT, PsbX, PsbY, PsbZ, Psb30/Ycf12, at least 3 peripheral proteins of the oxygen-evolving complex and a large number of cofactors. It forms dimeric complexes. Requires The D1/D2 heterodimer binds P680, chlorophylls that are the primary electron donor of PSII, and subsequent electron acceptors. It shares a non-heme iron and each subunit binds pheophytin, quinone, additional chlorophylls, carotenoids and lipids. D1 provides most of the ligands for the Mn4-Ca-O5 cluster of the oxygen-evolving complex (OEC). There is also a Cl(-1) ion associated with D1 and D2, which is required for oxygen evolution. The PSII complex binds additional chlorophylls, carotenoids and specific lipids. as cofactor. Tyr-161 forms a radical intermediate that is referred to as redox-active TyrZ, YZ or Y-Z. Post-translationally, C-terminally processed by CTPA; processing is essential to allow assembly of the oxygen-evolving complex and thus photosynthetic growth.

The protein resides in the plastid. The protein localises to the chloroplast thylakoid membrane. The catalysed reaction is 2 a plastoquinone + 4 hnu + 2 H2O = 2 a plastoquinol + O2. Functionally, photosystem II (PSII) is a light-driven water:plastoquinone oxidoreductase that uses light energy to abstract electrons from H(2)O, generating O(2) and a proton gradient subsequently used for ATP formation. It consists of a core antenna complex that captures photons, and an electron transfer chain that converts photonic excitation into a charge separation. The D1/D2 (PsbA/PsbD) reaction center heterodimer binds P680, the primary electron donor of PSII as well as several subsequent electron acceptors. This is Photosystem II protein D1 from Phaeodactylum tricornutum (strain CCAP 1055/1).